The primary structure comprises 335 residues: MQQTYKPNTSALKDGAPKATVDQKQLLPCKYRVGRVLGGGTYATVREAVHIETNKMYAAKIMNKKMMEKKQDFVKNEIAILKRVSYEHPNILHLVDFFETVNNLYLITELATGGELFDRICAKGSFYEADAAALMRTTTSAVKYLHDNGIVHRDLKPENLLYRSKDPNSDLLIADFGLSHFYEDSQYYMLMTACGTPEYMAPEVFRRTGYGKPVDMWAIGVITYFLLSGYTPFARPSQVEVIEAILANEYTFNDPCWSGISETAKDFIKKCLENDPSKRLTAADALKHPFLSEKRPATSNLLPNVRENFNARKTFRTAYNAVRAFNTWKKLENKH.

A Protein kinase domain is found at 31-291; it reads YRVGRVLGGG…AADALKHPFL (261 aa). 37 to 45 lines the ATP pocket; that stretch reads LGGGTYATV. The active-site Proton acceptor is the Asp154. Thr192 is modified (phosphothreonine; by autocatalysis). Residues 310-334 form a calmodulin-binding region; sequence NARKTFRTAYNAVRAFNTWKKLENK.

It belongs to the protein kinase superfamily. CAMK Ser/Thr protein kinase family. CaMK subfamily.

It is found in the cytoplasm. It carries out the reaction L-seryl-[protein] + ATP = O-phospho-L-seryl-[protein] + ADP + H(+). It catalyses the reaction L-threonyl-[protein] + ATP = O-phospho-L-threonyl-[protein] + ADP + H(+). Its function is as follows. Important in cell cycle regulation. The polypeptide is Calcium/calmodulin-dependent protein kinase type I (cmk1) (Schizosaccharomyces pombe (strain 972 / ATCC 24843) (Fission yeast)).